A 448-amino-acid chain; its full sequence is Methionine aminopeptidase 2 (448 aa).

Residues 1-17 are compositionally biased toward low complexity; it reads MPATAEAADAATQATDA. Positions 1–87 are disordered; it reads MPATAEAADA…QTEPPSIGLT (87 aa). A compositionally biased stretch (basic and acidic residues) spans 21–34; it reads KLEENKLPEGQERG. Over residues 35–46 the composition is skewed to acidic residues; the sequence is PEEEEDDDDDET. A compositionally biased stretch (basic residues) spans 55–71; it reads KKKKKKKSGAKKKKSKT. H200 contacts substrate. Residues D220, D231, and H300 each coordinate a divalent metal cation. Substrate is bound at residue H308. Residues E334 and E429 each coordinate a divalent metal cation.

The protein belongs to the peptidase M24A family. Methionine aminopeptidase eukaryotic type 2 subfamily. It depends on Co(2+) as a cofactor. Zn(2+) is required as a cofactor. Requires Mn(2+) as cofactor. Fe(2+) serves as cofactor.

The protein resides in the cytoplasm. It carries out the reaction Release of N-terminal amino acids, preferentially methionine, from peptides and arylamides.. Cotranslationally removes the N-terminal methionine from nascent proteins. The N-terminal methionine is often cleaved when the second residue in the primary sequence is small and uncharged (Met-Ala-, Cys, Gly, Pro, Ser, Thr, or Val). This Malassezia globosa (strain ATCC MYA-4612 / CBS 7966) (Dandruff-associated fungus) protein is Methionine aminopeptidase 2.